The sequence spans 293 residues: Ribosomal protein L11 methyltransferase (293 aa).

S-adenosyl-L-methionine-binding residues include T145, G166, D188, and N230.

It belongs to the methyltransferase superfamily. PrmA family.

It localises to the cytoplasm. The catalysed reaction is L-lysyl-[protein] + 3 S-adenosyl-L-methionine = N(6),N(6),N(6)-trimethyl-L-lysyl-[protein] + 3 S-adenosyl-L-homocysteine + 3 H(+). Methylates ribosomal protein L11. The chain is Ribosomal protein L11 methyltransferase from Yersinia pseudotuberculosis serotype I (strain IP32953).